Here is a 924-residue protein sequence, read N- to C-terminus: MSRSRQPPLVTGISPNEGIPWTKVTIRGENLGTGPTDLIGLTICGHNCLLTAEWMSASKIVCRVGQAKNDKGDIIVTTKSGGRGTSTVSFKLLKPEKIGILDQSAVWVDEMNYYDMRTDRNKGIPPLSLRPANPLGIEIEKSKFSQKDLEMLFHGMSADFTSENFSAAWYLIENHSNTSFEQLKMAVTNLKRQANKKSEGSLAYVKGGLSTFFEAQDALSAIHQKLEADGTEKVEGSMTQKLENVLNRASNTADTLFQEVLGRKDKADSTRNALNVLQRFKFLFNLPLNIERNIQKGDYDVVINDYEKAKSLFGKTEVQVFKKYYAEVETRIEALRELLLDKLLETPSTLHDQKRYIRYLSDLHASGDPAWQCIGAQHKWILQLMHSCKEGYVKDLKGNPGLHSPMLDLDNDTRPSVLGHLSQTASLKRGSSFQSGRDDTWRYKTPHRVAFVEKLTKLVLSQLPNFWKLWISYVNGSLFSETAEKSGQIERSKNVRQRQNDFKKMIQEVMHSLVKLTRGALLPLSIRDGEAKQYGGWEVKCELSGQWLAHAIQTVRLTHESLTALEIPNDLLQTIQDLILDLRVRCVMATLQHTAEEIKRLAEKEDWIVDNEGLTSLPCQFEQCIVCSLQSLKGVLECKPGEASVFQQPKTQEEVCQLSINIMQVFIYCLEQLSTKPDADIDTTHLSVDVSSPDLFGSIHEDFSLTSEQRLLIVLSNCCYLERHTFLNIAEHFEKHNFQGIEKITQVSMASLKELDQRLFENYIELKADPIVGSLEPGIYAGYFDWKDCLPPTGVRNYLKEALVNIIAVHAEVFTISKELVPRVLSKVIEAVSEELSRLMQCVSSFSKNGALQARLEICALRDTVAVYLTPESKSSFKQALEALPQLSSGADKKLLEELLNKFKSSMHLQLTCFQAASSTMMKT.

One can recognise an IPT/TIG domain in the interval 8 to 93 (PLVTGISPNE…GTSTVSFKLL (86 aa)). The stretch at 240–260 (QKLENVLNRASNTADTLFQEV) forms a coiled coil. Residues Ser431, Ser432, and Ser435 each carry the phosphoserine modification. Thr440 is modified (phosphothreonine). The residue at position 454 (Lys454) is an N6-acetyllysine. Ser888 bears the Phosphoserine mark.

This sequence belongs to the SEC5 family. In terms of assembly, the exocyst complex is composed of EXOC1, EXOC2, EXOC3, EXOC4, EXOC5, EXOC6, EXOC7 and EXOC8. Interacts with EXOC3L1. Interacts with GNEFR/DELGEF; this interaction occurs only in the presence of magnesium or manganese and is stimulated by dCTP or GTP. Interacts with RALA and RALB. Interacts with ARL13B; regulates ARL13B localization to the cilium membrane. As to expression, widely expressed with highest levels in brain and placenta.

It localises to the midbody. The protein localises to the midbody ring. Functionally, component of the exocyst complex involved in the docking of exocytic vesicles with fusion sites on the plasma membrane. This is Exocyst complex component 2 (EXOC2) from Homo sapiens (Human).